Consider the following 577-residue polypeptide: Cytidine monophosphate-N-acetylneuraminic acid hydroxylase (577 aa).

The propeptide occupies methionine 1 to arginine 4. The 99-residue stretch at leucine 14 to serine 112 folds into the Rieske domain. Positions 54, 56, 75, and 78 each coordinate [2Fe-2S] cluster.

It belongs to the CMP-Neu5Ac hydroxylase family. The cofactor is [2Fe-2S] cluster. As to expression, expressed in all tissues tested, except in brain.

Its subcellular location is the cytoplasm. It localises to the endoplasmic reticulum. The catalysed reaction is CMP-N-acetyl-beta-neuraminate + 2 Fe(II)-[cytochrome b5] + O2 + 2 H(+) = CMP-N-glycoloyl-beta-neuraminate + 2 Fe(III)-[cytochrome b5] + H2O. The protein operates within amino-sugar metabolism; N-acetylneuraminate metabolism. Its function is as follows. Sialic acids are components of carbohydrate chains of glycoconjugates and are involved in cell-cell recognition and cell-pathogen interactions. Catalyzes the conversion of CMP-N-acetylneuraminic acid (CMP-Neu5Ac) into its hydroxylated derivative CMP-N-glycolylneuraminic acid (CMP-Neu5Gc), a sialic acid abundantly expressed at the surface of many cells. The protein is Cytidine monophosphate-N-acetylneuraminic acid hydroxylase (Cmah) of Mus musculus (Mouse).